The primary structure comprises 504 residues: Multicopper oxidase MmcO (504 aa).

The tat-type signal signal peptide spans 1 to 44; sequence MPELATSGNAFDKRRFSRRGFLGAGIASGFALAACASKPTASGA. Cu cation contacts are provided by histidine 120, histidine 122, histidine 161, and histidine 163. The Plastocyanin-like domain occupies 190–349; sequence EWIIILDDWT…NALARALLST (160 aa). Histidine 437, histidine 440, histidine 442, histidine 485, cysteine 486, histidine 487, and histidine 491 together coordinate Cu cation.

The protein belongs to the multicopper oxidase family. The cofactor is Cu cation. Predicted to be exported by the Tat system. The position of the signal peptide cleavage has not been experimentally proven.

The protein localises to the cell inner membrane. The protein resides in the periplasm. The catalysed reaction is 4 Fe(2+) + O2 + 4 H(+) = 4 Fe(3+) + 2 H2O. Required for copper resistance. In vitro, oxidizes organic substrates and Fe(2+). May act in vivo by oxidation of toxic periplasmic Cu(+). The sequence is that of Multicopper oxidase MmcO from Mycobacterium tuberculosis (strain ATCC 25618 / H37Rv).